The following is a 44-amino-acid chain: Protein PsbN (44 aa).

A helical membrane pass occupies residues 7–29 (FFTTFLGCLLLSITGYSIYVGFG).

It belongs to the PsbN family.

It localises to the plastid. It is found in the chloroplast thylakoid membrane. Functionally, may play a role in photosystem I and II biogenesis. The sequence is that of Protein PsbN from Pleurastrum terricola (Filamentous green alga).